Here is a 303-residue protein sequence, read N- to C-terminus: Porphobilinogen deaminase (303 aa).

An S-(dipyrrolylmethanemethyl)cysteine modification is found at Cys235.

This sequence belongs to the HMBS family. In terms of assembly, monomer. The cofactor is dipyrromethane.

It carries out the reaction 4 porphobilinogen + H2O = hydroxymethylbilane + 4 NH4(+). The protein operates within porphyrin-containing compound metabolism; protoporphyrin-IX biosynthesis; coproporphyrinogen-III from 5-aminolevulinate: step 2/4. Tetrapolymerization of the monopyrrole PBG into the hydroxymethylbilane pre-uroporphyrinogen in several discrete steps. This Campylobacter fetus subsp. fetus (strain 82-40) protein is Porphobilinogen deaminase.